A 172-amino-acid polypeptide reads, in one-letter code: CD164 sialomucin-like 2 protein (172 aa).

Residues 1-29 form the signal peptide; it reads MAAPGPRALRAALCGGCCCLLLCAQLVLA. At 30-137 the chain is on the extracellular side; the sequence is GKGARGFGRG…PEDHSPGFDG (108 aa). 2 N-linked (GlcNAc...) asparagine glycosylation sites follow: N69 and N101. Residues 108-132 form a disordered region; it reads ASHHHSTEEPKPSTTGSPPIPEDHS. A helical membrane pass occupies residues 138–158; sequence ASFIGGIVLVLSLQATAFFVL. The Cytoplasmic portion of the chain corresponds to 159 to 172; it reads RFLKAKDSTYQTLI.

This sequence belongs to the CD164 family.

It is found in the membrane. This is CD164 sialomucin-like 2 protein (Cd164l2) from Mus musculus (Mouse).